The primary structure comprises 406 residues: Arginine biosynthesis bifunctional protein ArgJ (406 aa).

Positions 152, 179, 190, 277, 401, and 406 each coordinate substrate. Threonine 190 (nucleophile) is an active-site residue.

This sequence belongs to the ArgJ family. Heterotetramer of two alpha and two beta chains.

It localises to the cytoplasm. The enzyme catalyses N(2)-acetyl-L-ornithine + L-glutamate = N-acetyl-L-glutamate + L-ornithine. The catalysed reaction is L-glutamate + acetyl-CoA = N-acetyl-L-glutamate + CoA + H(+). It functions in the pathway amino-acid biosynthesis; L-arginine biosynthesis; L-ornithine and N-acetyl-L-glutamate from L-glutamate and N(2)-acetyl-L-ornithine (cyclic): step 1/1. The protein operates within amino-acid biosynthesis; L-arginine biosynthesis; N(2)-acetyl-L-ornithine from L-glutamate: step 1/4. Its function is as follows. Catalyzes two activities which are involved in the cyclic version of arginine biosynthesis: the synthesis of N-acetylglutamate from glutamate and acetyl-CoA as the acetyl donor, and of ornithine by transacetylation between N(2)-acetylornithine and glutamate. The sequence is that of Arginine biosynthesis bifunctional protein ArgJ from Neisseria gonorrhoeae.